Consider the following 1431-residue polypeptide: MTKPIFKSKTKPLGWSKISSKEVINEDEEEEEGGEEGGEEEEIDNNKNSNNSSSNSNNNNNDNNNNNGEERKVEKEEEKEEINHYRNQFEKDLLDMELKALNRETIDNILSGLNSYEIFKEVNFDFEKLYSIIISEPPPLFDTFFDSVSSFEIFFTDCLILLCSNFPDGIDTSITRPNFNDFYNHFKDRGVINKYISRENIHKALNDKLMTDYFNSGIYLGLLDTLDIAAIRFITIFGKFLSYEVVETISNSLFRYRTDKIEFLSDIIRELLLCNEKYRTLSKSYDLVQKRLQKEEFTFIKVFEDDDPKLFSALYQPPDIIKLITEPEKDSGFWCMIGIFKSKRILDYLIRTEPSKSWFKGKESDYFFSIAEMGGKYFNWTLLEPKLIKKEVNQKSLKGVIPPRELNSQQRNTQFFRVFNGVTGFNDIRFVYANPSLAQHAIKFIQKVTECGLFLNTDVRNVRDSIPNSNSFLFRKFLEVNFFYRYEKDNEVYQHQPTEENSLLYSTSIISRIVEMEVTDLLSVVLKNLTQQGCSLAREAVDERSLLSTIHSDKYYNSSIVVLHNYWPIPPKFCDCSTSFISMANGKLPRTYSGSDGVIPYIFFARNHLTLGFLLSIHNNITDTIDINHWISVAISGGLYYDKEEIFRKYPLLQKESTLQKYPRPVNILEFQTLLENNECIEYIARTFIKEIPPHEVPTVKHSDLLILFEISVMKKRSIRSKESLQAELDLIEEEKREKKKQKDKKKNKSNQNQKNNNNQNNQSNNNKINSPSSNKLTQNVTPPSSPVNIITSSSTTSSSTSSTTSSTTSSTIEPKPPTQTLPIKTSSPTKPESQKPSTPDPLIPKSSKSTTKNNNNNNNNNNNNNNNNNNNNNNNNNKENREMALEVINEMEKIEIEESLLSTSSLVQPQQQSQQSQQQQEQQQQQQQQQQQQQQQQQQQQQQQQQQQQQQEKQQEQQEQQESIQLNQTLTPIIPDFQIGKFKFSRDENNIIGRGSNGTLVFRGIWNDRIPVAVKQMQKAFNPHISKEIEVLIRLTSNNCSNMIRYIDQEEDQLFVYLGLTLCEESLQDLMESKRYKEFIEKTTTTNITTTFNNNIIDENLYEQRILSLFKDVINGINFLHCQDIVHNDLNPRNILVHKGNFVISDLGLSKMQVETSYSFTNNAPTGQEGYHPIEVLQEKRKTKSVDIFSLGCILFYLLTNGQHPFGNNKLLRVANIVYDKPDLEPLKFNAPALDLVRLMISQDEKKRPTIDTILNHPLFWSTNEKIKFYESSLNLLKDPNNSQSKHSKLLNYYQNDNSGGVLFLSKPWNQIIDPFLIDHVENNNNNNNNNNNNKQNSKKLAIVAYQYDQVRDLVRCIRNSLVHHKDILRSITQQQNLPPSSKEFANDCLKSQESVLLYFECKFPDLLFHLYQQFKKSDFNSKDYLNIKF.

Residues 1–10 show a composition bias toward basic residues; sequence MTKPIFKSKT. Disordered stretches follow at residues 1-81 and 736-879; these read MTKP…EKEE and KREK…NNNK. Residues 25–43 are compositionally biased toward acidic residues; the sequence is NEDEEEEEGGEEGGEEEEI. Residues 46 to 67 are compositionally biased toward low complexity; that stretch reads NKNSNNSSSNSNNNNNDNNNNN. Coiled coils occupy residues 57 to 97 and 715 to 759; these read NNNN…LDME and KKRS…NNNN. Residues 68–81 are compositionally biased toward basic and acidic residues; that stretch reads GEERKVEKEEEKEE. A compositionally biased stretch (basic residues) spans 738–749; it reads EKKKQKDKKKNK. The segment covering 750 to 776 has biased composition (low complexity); that stretch reads SNQNQKNNNNQNNQSNNNKINSPSSNK. A compositionally biased stretch (polar residues) spans 777–791; the sequence is LTQNVTPPSSPVNII. The span at 792–812 shows a compositional bias: low complexity; sequence TSSSTTSSSTSSTTSSTTSST. Residues 821-838 are compositionally biased toward polar residues; it reads TLPIKTSSPTKPESQKPS. Residues 854 to 878 show a composition bias toward low complexity; the sequence is NNNNNNNNNNNNNNNNNNNNNNNNN. Residues 860–971 adopt a coiled-coil conformation; it reads NNNNNNNNNN…QESIQLNQTL (112 aa). The 275-residue stretch at 987–1261 folds into the Protein kinase domain; that stretch reads RDENNIIGRG…IDTILNHPLF (275 aa). ATP-binding positions include 993–1001 and K1016; that span reads IGRGSNGTL. Catalysis depends on D1130, which acts as the Proton acceptor. The KEN domain maps to 1264 to 1431; it reads TNEKIKFYES…NSKDYLNIKF (168 aa).

The protein belongs to the protein kinase superfamily. Ser/Thr protein kinase family.

It catalyses the reaction L-seryl-[protein] + ATP = O-phospho-L-seryl-[protein] + ADP + H(+). The enzyme catalyses L-threonyl-[protein] + ATP = O-phospho-L-threonyl-[protein] + ADP + H(+). The sequence is that of Probable serine/threonine-protein kinase irlA (irlA) from Dictyostelium discoideum (Social amoeba).